The sequence spans 929 residues: Band 4.1-like protein 3 (929 aa).

At methionine 1 the chain carries N-acetylmethionine. Residues 1–72 form a disordered region; the sequence is MTTESGSDSE…STPVKREIGD (72 aa). N-acetylthreonine; in Band 4.1-like protein 3, N-terminally processed is present on threonine 2. The segment covering 20–33 has biased composition (low complexity); sequence QEAAGPQGQAGAQP. Phosphoserine is present on serine 96. Residues 118 to 399 form the FERM domain; it reads MQCKVTLLDG…EHHTFFRLLL (282 aa). The interval 402–528 is hydrophilic; sequence APPKKFLTLG…PVTALRHEGK (127 aa). A phosphoserine mark is found at serine 428, serine 451, and serine 486. Residues 490–554 are disordered; it reads LITTVTPEKK…TESDQEEDAE (65 aa). Position 495 is a phosphothreonine (threonine 495). Over residues 496-516 the composition is skewed to basic and acidic residues; the sequence is PEKKAEEERVEEEDRRKKAEE. Threonine 518 carries the phosphothreonine modification. Positions 523-536 are enriched in basic and acidic residues; the sequence is LRHEGKTDSERTDT. Histidine 525 and serine 543 each carry phosphoserine. Threonine 545 bears the Phosphothreonine mark. Position 547 is a phosphoserine (serine 547). The tract at residues 559-602 is spectrin--actin-binding; sequence DLDKTQDELMKHQTNISELKRTFLETSTETALTNEWEKRLSTSP. Disordered regions lie at residues 608–630, 665–689, and 705–807; these read RQEDAPMIEPLVPEETKQSSGEK, LETKTEPVEAEVESTPHPQPLSTEK, and VHAS…SPGG. Threonine 725 is modified (phosphothreonine). Positions 726 to 737 are enriched in basic and acidic residues; sequence PTDRRHTGKGKE. Positions 777-929 are C-terminal (CTD); that stretch reads RTSEGLEQKS…TEITPEDGED (153 aa). Positions 789 to 802 are enriched in low complexity; the sequence is ESSTVRVESTSVGS. 2 positions are modified to phosphoserine: serine 802 and serine 804. A Phosphothreonine modification is found at threonine 923.

Interacts (via FERM domain) with CADM1. Interacts (via FERM domain) with PRMT3; the interaction is direct and inhibits the protein-arginine N-methyltransferase activity of PRMT3. Interacts with PRMT5. Interacts with PRMT6. As to quaternary structure, has the complete spectrin--actin-binding (SAB) domain and fully interacts with spectrin and actin. As to expression, detected in brain (at protein level). Highest expression in brain, lower in testis, adrenal gland, heart and kidney. Also present in muscle and epithelial cells. Isoform 1 is expressed in brain, isoform 2 is expressed in heart and isoform 3 is mostly expressed in kidney but also in heart and brain. Isoform 6 seems to be most abundant in kidney while isoform 4 and isoform 5 are predominantly expressed in heart and brain.

It localises to the cytoplasm. The protein resides in the cytoskeleton. Its subcellular location is the cell membrane. It is found in the cell junction. Functionally, tumor suppressor that inhibits cell proliferation and promotes apoptosis. Modulates the activity of protein arginine N-methyltransferases, including PRMT3 and PRMT5. In Mus musculus (Mouse), this protein is Band 4.1-like protein 3.